We begin with the raw amino-acid sequence, 360 residues long: Mitogen-activated protein kinase 1 (360 aa).

Ala-2 carries the N-acetylalanine modification. Residues 25–313 (YTNLSYIGEG…VEQALAHPYL (289 aa)) form the Protein kinase domain. Ser-29 carries the post-translational modification Phosphoserine; by SGK1. ATP-binding positions include 31-39 (IGEGAYGMV) and Lys-54. Catalysis depends on Asp-149, which acts as the Proton acceptor. Thr-185 carries the post-translational modification Phosphothreonine; by MAP2K1 and MAP2K2. The TXY motif lies at 185–187 (TEY). Tyr-187 carries the post-translational modification Phosphotyrosine; by MAP2K1 and MAP2K2. At Thr-190 the chain carries Phosphothreonine; by autocatalysis. 3 positions are modified to phosphoserine: Ser-246, Ser-248, and Ser-284.

This sequence belongs to the protein kinase superfamily. CMGC Ser/Thr protein kinase family. MAP kinase subfamily. Binds both upstream activators and downstream substrates in multimolecular complexes. Interacts with ADAM15, ARHGEF2, ARRB2, DAPK1 (via death domain), HSF4, IER3, IPO7, MKNK2, MORG1, NISCH, PEA15, SGK1, and isoform 1 of NEK2. Interacts (via phosphorylated form) with TPR (via C-terminal region and phosphorylated form); the interaction requires dimerization of MAPK1/ERK2 and increases following EGF stimulation. Interacts with MAP2K1. Interacts with DUSP6. Interacts (phosphorylated form) with CAV2 ('Tyr-19'-phosphorylated form); the interaction, promoted by insulin, leads to nuclear location and MAPK1 activation. MKNK2 isoform 1 binding prevents from dephosphorylation and inactivation. Interacts with DCC. The phosphorylated form interacts with PML. Interacts with STYX. Interacts with CDK2AP2. Interacts with CAVIN4. Interacts with DUSP7; the interaction enhances DUSP7 phosphatase activity. Interacts with GIT1; this interaction is necessary for MAPK1 localization to focal adhesions. Interacts with ZNF263. Interacts with phosphoglycerate kinase PGK1; the interaction is direct, occurs under hypoxic conditions, and promotes interaction between PGK1 and PIN1. It depends on Mg(2+) as a cofactor. In terms of processing, dually phosphorylated on Thr-185 and Tyr-187, which activates the enzyme. Phosphorylated upon FLT3 and KIT signaling. Phosphorylation on Ser-29 by SGK1 results in its activation by enhancing its interaction with MAP2K1/MEK1 and MAP2K2/MEK2. Phosphorylation at Ser-246 and Ser-248 as well as autophosphorylation at Thr-190 promote nuclear localization. Ligand-activated ALK induces tyrosine phosphorylation. Dephosphorylated by PTPRJ at Tyr-187. Dephosphorylated by DUSP1 and DUSP2 at Thr-185 and Tyr-187. ISGylated. Post-translationally, ubiquitinated by TRIM15 via 'Lys-63'-linked ubiquitination; leading to activation. Deubiquitinated by CYLD.

It is found in the nucleus. The protein resides in the cytoplasm. Its subcellular location is the cytoskeleton. The protein localises to the microtubule organizing center. It localises to the centrosome. It is found in the spindle. The protein resides in the membrane. Its subcellular location is the caveola. The protein localises to the cell junction. It localises to the focal adhesion. The catalysed reaction is L-seryl-[protein] + ATP = O-phospho-L-seryl-[protein] + ADP + H(+). It catalyses the reaction L-threonyl-[protein] + ATP = O-phospho-L-threonyl-[protein] + ADP + H(+). Phosphorylated by MAP2K1/MEK1 and MAP2K2/MEK2 on Thr-185 and Tyr-187 in response to external stimuli like insulin or NGF. Both phosphorylations are required for activity. This phosphorylation causes dramatic conformational changes, which enable full activation and interaction of MAPK1/ERK2 with its substrates. Phosphorylation on Ser-29 by SGK1 results in its activation by enhancing its interaction with MAP2K1/MEK1 and MAP2K2/MEK2. Dephosphorylated and inactivated by DUSP1, DUSP3, DUSP6 and DUSP9. Inactivated by pyrimidylpyrrole inhibitors. Its function is as follows. Serine/threonine kinase which acts as an essential component of the MAP kinase signal transduction pathway. MAPK1/ERK2 and MAPK3/ERK1 are the 2 MAPKs which play an important role in the MAPK/ERK cascade. They participate also in a signaling cascade initiated by activated KIT and KITLG/SCF. Depending on the cellular context, the MAPK/ERK cascade mediates diverse biological functions such as cell growth, adhesion, survival and differentiation through the regulation of transcription, translation, cytoskeletal rearrangements. The MAPK/ERK cascade also plays a role in initiation and regulation of meiosis, mitosis, and postmitotic functions in differentiated cells by phosphorylating a number of transcription factors. About 160 substrates have already been discovered for ERKs. Many of these substrates are localized in the nucleus, and seem to participate in the regulation of transcription upon stimulation. However, other substrates are found in the cytosol as well as in other cellular organelles, and those are responsible for processes such as translation, mitosis and apoptosis. Moreover, the MAPK/ERK cascade is also involved in the regulation of the endosomal dynamics, including lysosome processing and endosome cycling through the perinuclear recycling compartment (PNRC); as well as in the fragmentation of the Golgi apparatus during mitosis. The substrates include transcription factors (such as ATF2, BCL6, ELK1, ERF, FOS, HSF4 or SPZ1), cytoskeletal elements (such as CANX, CTTN, GJA1, MAP2, MAPT, PXN, SORBS3 or STMN1), regulators of apoptosis (such as BAD, BTG2, CASP9, DAPK1, IER3, MCL1 or PPARG), regulators of translation (such as EIF4EBP1 and FXR1) and a variety of other signaling-related molecules (like ARHGEF2, DCC, FRS2 or GRB10). Protein kinases (such as RAF1, RPS6KA1/RSK1, RPS6KA3/RSK2, RPS6KA2/RSK3, RPS6KA6/RSK4, SYK, MKNK1/MNK1, MKNK2/MNK2, RPS6KA5/MSK1, RPS6KA4/MSK2, MAPKAPK3 or MAPKAPK5) and phosphatases (such as DUSP1, DUSP4, DUSP6 or DUSP16) are other substrates which enable the propagation the MAPK/ERK signal to additional cytosolic and nuclear targets, thereby extending the specificity of the cascade. Mediates phosphorylation of TPR in response to EGF stimulation. May play a role in the spindle assembly checkpoint. Phosphorylates PML and promotes its interaction with PIN1, leading to PML degradation. Phosphorylates CDK2AP2. Phosphorylates phosphoglycerate kinase PGK1 under hypoxic conditions to promote its targeting to the mitochondrion and suppress the formation of acetyl-coenzyme A from pyruvate. Functionally, acts as a transcriptional repressor. Binds to a [GC]AAA[GC] consensus sequence. Repress the expression of interferon gamma-induced genes. Seems to bind to the promoter of CCL5, DMP1, IFIH1, IFITM1, IRF7, IRF9, LAMP3, OAS1, OAS2, OAS3 and STAT1. Transcriptional activity is independent of kinase activity. The protein is Mitogen-activated protein kinase 1 of Bos taurus (Bovine).